The chain runs to 367 residues: tRNA/tmRNA (uracil-C(5))-methyltransferase (367 aa).

5 residues coordinate S-adenosyl-L-methionine: Gln-191, Tyr-218, Asn-223, Glu-239, and Asp-299. The Nucleophile role is filled by Cys-324. The active-site Proton acceptor is the Glu-358.

This sequence belongs to the class I-like SAM-binding methyltransferase superfamily. RNA M5U methyltransferase family. TrmA subfamily.

It carries out the reaction uridine(54) in tRNA + S-adenosyl-L-methionine = 5-methyluridine(54) in tRNA + S-adenosyl-L-homocysteine + H(+). The enzyme catalyses uridine(341) in tmRNA + S-adenosyl-L-methionine = 5-methyluridine(341) in tmRNA + S-adenosyl-L-homocysteine + H(+). Dual-specificity methyltransferase that catalyzes the formation of 5-methyluridine at position 54 (m5U54) in all tRNAs, and that of position 341 (m5U341) in tmRNA (transfer-mRNA). The protein is tRNA/tmRNA (uracil-C(5))-methyltransferase of Campylobacter concisus (strain 13826).